The chain runs to 255 residues: tRNA (guanine-N(7)-)-methyltransferase (255 aa).

Positions 1-29 are disordered; it reads MMHDDPNEAGLPPDDAALPDEAADGADEV. A compositionally biased stretch (acidic residues) spans 17–27; the sequence is ALPDEAADGAD. Residues glutamate 86, glutamate 111, aspartate 138, and aspartate 161 each coordinate S-adenosyl-L-methionine. The active site involves aspartate 161. Substrate contacts are provided by residues lysine 165, aspartate 197, and 232 to 235; that span reads TKFE.

Belongs to the class I-like SAM-binding methyltransferase superfamily. TrmB family.

The catalysed reaction is guanosine(46) in tRNA + S-adenosyl-L-methionine = N(7)-methylguanosine(46) in tRNA + S-adenosyl-L-homocysteine. Its pathway is tRNA modification; N(7)-methylguanine-tRNA biosynthesis. Functionally, catalyzes the formation of N(7)-methylguanine at position 46 (m7G46) in tRNA. This Burkholderia ambifaria (strain ATCC BAA-244 / DSM 16087 / CCUG 44356 / LMG 19182 / AMMD) (Burkholderia cepacia (strain AMMD)) protein is tRNA (guanine-N(7)-)-methyltransferase.